A 214-amino-acid chain; its full sequence is Superoxide dismutase [Mn/Fe] (214 aa).

The Fe(3+) site is built by H31, H79, D165, and H169. H31, H79, D165, and H169 together coordinate Mn(2+).

Belongs to the iron/manganese superoxide dismutase family. Mn(2+) serves as cofactor. Requires Fe(3+) as cofactor.

It catalyses the reaction 2 superoxide + 2 H(+) = H2O2 + O2. Destroys superoxide anion radicals which are normally produced within the cells and which are toxic to biological systems. Catalyzes the dismutation of superoxide anion radicals into O2 and H2O2 by successive reduction and oxidation of the transition metal ion at the active site. This chain is Superoxide dismutase [Mn/Fe] (sod), found in Aeropyrum pernix (strain ATCC 700893 / DSM 11879 / JCM 9820 / NBRC 100138 / K1).